The chain runs to 194 residues: Xanthine phosphoribosyltransferase (194 aa).

Residues leucine 20 and asparagine 27 each coordinate xanthine. 5-phospho-alpha-D-ribose 1-diphosphate is bound at residue 128 to 132 (ANGEA). Lysine 156 contributes to the xanthine binding site.

The protein belongs to the purine/pyrimidine phosphoribosyltransferase family. Xpt subfamily. In terms of assembly, homodimer.

Its subcellular location is the cytoplasm. The catalysed reaction is XMP + diphosphate = xanthine + 5-phospho-alpha-D-ribose 1-diphosphate. The protein operates within purine metabolism; XMP biosynthesis via salvage pathway; XMP from xanthine: step 1/1. Converts the preformed base xanthine, a product of nucleic acid breakdown, to xanthosine 5'-monophosphate (XMP), so it can be reused for RNA or DNA synthesis. The sequence is that of Xanthine phosphoribosyltransferase from Macrococcus caseolyticus (strain JCSC5402) (Macrococcoides caseolyticum).